The sequence spans 189 residues: uncharacterized protein (189 aa).

The protein belongs to the mimivirus R457/R459 family.

It localises to the virion. This is an uncharacterized protein from Acanthamoeba polyphaga mimivirus (APMV).